Reading from the N-terminus, the 255-residue chain is 3-deoxy-manno-octulosonate cytidylyltransferase (255 aa).

The protein belongs to the KdsB family.

It localises to the cytoplasm. It carries out the reaction 3-deoxy-alpha-D-manno-oct-2-ulosonate + CTP = CMP-3-deoxy-beta-D-manno-octulosonate + diphosphate. It participates in nucleotide-sugar biosynthesis; CMP-3-deoxy-D-manno-octulosonate biosynthesis; CMP-3-deoxy-D-manno-octulosonate from 3-deoxy-D-manno-octulosonate and CTP: step 1/1. The protein operates within bacterial outer membrane biogenesis; lipopolysaccharide biosynthesis. Activates KDO (a required 8-carbon sugar) for incorporation into bacterial lipopolysaccharide in Gram-negative bacteria. In Thermodesulfovibrio yellowstonii (strain ATCC 51303 / DSM 11347 / YP87), this protein is 3-deoxy-manno-octulosonate cytidylyltransferase.